We begin with the raw amino-acid sequence, 217 residues long: Adenylate kinase (217 aa).

10–15 provides a ligand contact to ATP; that stretch reads GAGKGT. Residues 30–59 are NMP; the sequence is STGDMFREAIKRGTPLGRQAEVYIKGGRLV. AMP contacts are provided by residues T31, R36, 57–59, 85–88, and Q92; these read RLV and GFPR. The LID stretch occupies residues 126–163; the sequence is GRRVCRQCGATYHVRYNPPAVPGKCDACGQDLVQRADD. R127 lines the ATP pocket. Residues C130 and C133 each contribute to the Zn(2+) site. 136–137 contacts ATP; the sequence is TY. The Zn(2+) site is built by C150 and C153. AMP is bound by residues R160 and R171. Q199 is a binding site for ATP.

The protein belongs to the adenylate kinase family. In terms of assembly, monomer.

The protein localises to the cytoplasm. The catalysed reaction is AMP + ATP = 2 ADP. The protein operates within purine metabolism; AMP biosynthesis via salvage pathway; AMP from ADP: step 1/1. Its function is as follows. Catalyzes the reversible transfer of the terminal phosphate group between ATP and AMP. Plays an important role in cellular energy homeostasis and in adenine nucleotide metabolism. The protein is Adenylate kinase of Moorella thermoacetica (strain ATCC 39073 / JCM 9320).